The sequence spans 420 residues: Bicoumarin synthase ktnC (420 aa).

C362 lines the heme pocket.

This sequence belongs to the cytochrome P450 family. It depends on heme as a cofactor.

The catalysed reaction is 2 7-demethylsiderin + NADPH + O2 = orlandin + NADP(+) + 2 H2O. It participates in secondary metabolite biosynthesis. Functionally, non-reducing polyketide synthase; part of the gene cluster that mediates the biosynthesis of the bicoumarin kotanin. The non-reducing polyketide synthase ktnS first catalyzes the formation of the pentaketidic 4,7-dihydroxy-5-methylcoumarin from acetyl coenzyme A and 4 malonyl coenzyme A molecules. Further O-methylation by ktnB leads to the formation of 7-demethylsiderin. Then, an oxidative phenol coupling catalyzed by the cytochrome P450 monooxygenase ktnC forms the 8,8'-dimer P-orlandin via dimerization the monomeric precursor, 7-demethylsiderin. P-orlandin is subsequently O-methylated in a stepwise fashion to demethylkotanin and kotanin. This chain is Bicoumarin synthase ktnC, found in Aspergillus niger (strain ATCC MYA-4892 / CBS 513.88 / FGSC A1513).